A 564-amino-acid polypeptide reads, in one-letter code: Nucleolus and neural progenitor protein (564 aa).

The tract at residues 431 to 495 is disordered; the sequence is GSRTSTSEHP…KRRCSGTVQR (65 aa). Positions 442 to 459 are enriched in basic residues; the sequence is RQRRSKYKVLSRQRKPQR. Residues 442-460 form a nuclear localization signal region; it reads RQRRSKYKVLSRQRKPQRK. Positions 460 to 473 are enriched in polar residues; that stretch reads KLQSTLLKETQQVP.

It belongs to the nepro family.

The protein localises to the nucleus. It is found in the nucleolus. Functionally, may play a role in cortex development as part of the Notch signaling pathway. Downstream of Notch may repress the expression of proneural genes and inhibit neuronal differentiation thereby maintaining neural progenitors. May also play a role in preimplentation embryo development. This Mus musculus (Mouse) protein is Nucleolus and neural progenitor protein.